Here is a 324-residue protein sequence, read N- to C-terminus: ATP synthase mitochondrial F1 complex assembly factor 1 (324 aa).

The transit peptide at 1-54 directs the protein to the mitochondrion; the sequence is MAAVVSAAGGACPAVLQVAGLYRGLCAVRSRALGLGFVSPAQLRVFPVRRGSGL.

This sequence belongs to the ATP11 family. As to quaternary structure, interacts with ATP5F1B; involved in the assembly of the F1 component of the mitochondrial ATP synthase (ATPase). As to expression, widely expressed but with low level.

It is found in the mitochondrion inner membrane. Its function is as follows. Has a complex stabilizing activity in the assembly of the mitochondrial F1-F0 complex. The protein is ATP synthase mitochondrial F1 complex assembly factor 1 of Mus musculus (Mouse).